A 416-amino-acid polypeptide reads, in one-letter code: Pectin acetylesterase 10 (416 aa).

The signal sequence occupies residues 1-20 (MRKLFLLGFIVAGLVLGNEA). N-linked (GlcNAc...) asparagine glycosylation occurs at Asn27. Catalysis depends on charge relay system residues Ser198, Asp294, and His361.

The protein belongs to the pectinacetylesterase family.

The protein localises to the secreted. It localises to the cell wall. In terms of biological role, hydrolyzes acetyl esters in homogalacturonan regions of pectin. In type I primary cell wall, galacturonic acid residues of pectin can be acetylated at the O-2 and O-3 positions. Decreasing the degree of acetylation of pectin gels in vitro alters their physical properties. This is Pectin acetylesterase 10 from Arabidopsis thaliana (Mouse-ear cress).